The chain runs to 53 residues: UPF0391 membrane protein GFO_1615 (53 aa).

2 helical membrane-spanning segments follow: residues 4 to 24 and 27 to 47; these read LIVIFLIIAIIAAIFGFGGVA and AADIAKIIFYIFLVLLVISVL.

It belongs to the UPF0391 family.

It localises to the cell membrane. This chain is UPF0391 membrane protein GFO_1615, found in Christiangramia forsetii (strain DSM 17595 / CGMCC 1.15422 / KT0803) (Gramella forsetii).